A 426-amino-acid chain; its full sequence is Glucose-6-phosphate isomerase (426 aa).

The active-site Proton donor is Glu276. Active-site residues include His297 and Lys413.

It belongs to the GPI family.

It localises to the cytoplasm. It catalyses the reaction alpha-D-glucose 6-phosphate = beta-D-fructose 6-phosphate. The protein operates within carbohydrate biosynthesis; gluconeogenesis. Its pathway is carbohydrate degradation; glycolysis; D-glyceraldehyde 3-phosphate and glycerone phosphate from D-glucose: step 2/4. Its function is as follows. Catalyzes the reversible isomerization of glucose-6-phosphate to fructose-6-phosphate. The protein is Glucose-6-phosphate isomerase of Mesoplasma florum (strain ATCC 33453 / NBRC 100688 / NCTC 11704 / L1) (Acholeplasma florum).